The primary structure comprises 334 residues: Phospholipase A1 1 (334 aa).

The first 23 residues, 1 to 23, serve as a signal peptide directing secretion; it reads MMNLKYLLFFCLVQALHYCYAYG. Positions 24–33 are excised as a propeptide; sequence DPSLSNELDR. The cysteines at positions 37 and 120 are disulfide-linked. Serine 170 (nucleophile) is an active-site residue. Aspartate 198 (charge relay system) is an active-site residue. Disulfide bonds link cysteine 209–cysteine 214 and cysteine 252–cysteine 261. Residue histidine 263 is the Charge relay system of the active site. Disulfide bonds link cysteine 278-cysteine 302, cysteine 279-cysteine 327, and cysteine 295-cysteine 300.

This sequence belongs to the AB hydrolase superfamily. Lipase family. Not glycosylated. Expressed by the venom gland.

It is found in the secreted. The enzyme catalyses a 1,2-diacyl-sn-glycero-3-phosphocholine + H2O = a 2-acyl-sn-glycero-3-phosphocholine + a fatty acid + H(+). In terms of biological role, catalyzes the hydrolysis of phosphatidylcholine with phospholipase A1 activity (3.6 U/ml). May act as an allergen and induce hemolytic activity. In vivo, a mixture of this protein and Ves a 1.02 is able to paralyze crickets. The protein is Phospholipase A1 1 of Vespa affinis (Lesser banded hornet).